The chain runs to 490 residues: Probable alcohol acetyltransferase FCK4 (490 aa).

It belongs to the alcohol acetyltransferase FCK4 family.

It participates in secondary metabolite biosynthesis. Probable alcohol acetyltransferase; part of the gene cluster that mediates the biosynthesis of cytokinins such as fusatin, fusatinic acids or 8-oxofusatin, known for their growth promoting and anti-senescence activities toward host plants. FCK1 is a bifunctional enzyme that performs the first steps in the biosynthesis of Fusarium cytokinins. It first condenses adenosine monophosphate (AMP) with dimethylallyl diphosphate (DMAPP) to yield isoprenyl adenosine monophosphate. It then catalyzes the removal of the phosphoribose to produce isopentenylaldehyde. The cytochrome P450 monooxygenase then converts isopentenylaldehyde to trans-zeatin. A condensation step converts trans-zeatin to fusatin which is further modified to produce fusatinic acid. The mechanism for oxidation of fusatin to fusatinic acid remains unknown. 8-oxofusatin could be produced through several pathways, via direct oxygenation of fusatin, or via the 8-oxo-pentenyladenine intermediate which itself must arise from either the prenylation of 8-oxo-AMP by FCK1 and/or oxygenation of isopentenylaldehyde. Both the FCK3 and FCK4 enzymes act downstream of the identified cytokinins to produce yet unidentified compounds. The polypeptide is Probable alcohol acetyltransferase FCK4 (Fusarium pseudograminearum (strain CS3096) (Wheat and barley crown-rot fungus)).